A 283-amino-acid polypeptide reads, in one-letter code: Release factor glutamine methyltransferase (283 aa).

S-adenosyl-L-methionine-binding positions include 121-125 (GTGSG), Asp144, and Asn188. 188 to 191 (NPPY) is a substrate binding site.

This sequence belongs to the protein N5-glutamine methyltransferase family. PrmC subfamily.

The enzyme catalyses L-glutaminyl-[peptide chain release factor] + S-adenosyl-L-methionine = N(5)-methyl-L-glutaminyl-[peptide chain release factor] + S-adenosyl-L-homocysteine + H(+). Its function is as follows. Methylates the class 1 translation termination release factors RF1/PrfA and RF2/PrfB on the glutamine residue of the universally conserved GGQ motif. This Bacillus anthracis protein is Release factor glutamine methyltransferase.